The primary structure comprises 438 residues: MKIILILVLVLVVSINALNNQFLHISDVHYSSAMNSLLYNASVMCIGPTVTKEFDHKEHEDLIEDTERLNLPTNGLYGRYGCDTNQLLLSEVISEMLNVNSNPDFIIYTGDGAGHGLPNGPWSESQSTLAKSLYGAYPNTQFIPTIGNNDVFPDYNSQCNDSNLQFLYETWAQWIPTNQVSSFLYRGSFVVSPVSGLTIISLNTILYSVKNKNTFSTPQDPCGQFAWLEQQLIAAKQAGNSVYIIGHIFPGLDPFYLQGTWKSQYQTAFFNITSDYQTTITAGFFGHIHRDEIRSIQFDNPSLTNNHYFPMFIGSSITPVYFNNPTFKQFTYDSQSKNITDITAYFSDVYISNLKGHMNWTEEYDFVSIYDIDNQYGIGGDQLNSLMERMVSSNSIFNNYDNFRSGSYLSDSPSMTCLINAATIDELNACTYIAANVA.

Positions 1 to 17 (MKIILILVLVLVVSINA) are cleaved as a signal peptide. Positions 27 and 29 each coordinate Zn(2+). Residue Asn-40 is glycosylated (N-linked (GlcNAc...) asparagine). Zn(2+)-binding residues include Asp-111 and Asn-148. The N-linked (GlcNAc...) asparagine glycan is linked to Asn-160. Residue His-247 participates in Zn(2+) binding. N-linked (GlcNAc...) asparagine glycosylation is present at Asn-271. Zn(2+) contacts are provided by His-287 and His-289. 2 N-linked (GlcNAc...) asparagine glycosylation sites follow: Asn-338 and Asn-359.

The protein belongs to the acid sphingomyelinase family. Zn(2+) is required as a cofactor.

Its subcellular location is the secreted. This chain is Sphingomyelinase phosphodiesterase D (sgmD), found in Dictyostelium discoideum (Social amoeba).